A 127-amino-acid polypeptide reads, in one-letter code: Fluoride-specific ion channel FluC (127 aa).

The next 4 helical transmembrane spans lie at L4–S24, G39–I59, A68–Y88, and V102–L122. G78 and T81 together coordinate Na(+).

The protein belongs to the fluoride channel Fluc/FEX (TC 1.A.43) family.

Its subcellular location is the cell inner membrane. The catalysed reaction is fluoride(in) = fluoride(out). With respect to regulation, na(+) is not transported, but it plays an essential structural role and its presence is essential for fluoride channel function. Fluoride-specific ion channel. Important for reducing fluoride concentration in the cell, thus reducing its toxicity. The chain is Fluoride-specific ion channel FluC from Thermotoga petrophila (strain ATCC BAA-488 / DSM 13995 / JCM 10881 / RKU-1).